A 481-amino-acid polypeptide reads, in one-letter code: Betaine aldehyde dehydrogenase 2 (481 aa).

Ser-29 and Asp-96 together coordinate K(+). 152 to 154 contacts NAD(+); that stretch reads GAW. Residue Lys-164 is the Charge relay system of the active site. 178-181 serves as a coordination point for NAD(+); the sequence is KPSE. Residue Val-182 coordinates K(+). 231–234 is an NAD(+) binding site; it reads SVKT. Ile-246 serves as a coordination point for K(+). Catalysis depends on Glu-252, which acts as the Proton acceptor. Residues Gly-254, Cys-286, and Glu-383 each coordinate NAD(+). The active-site Nucleophile is Cys-286. A Cysteine sulfenic acid (-SOH) modification is found at Cys-286. K(+)-binding residues include Lys-453 and Gly-456. Glu-460 functions as the Charge relay system in the catalytic mechanism.

Belongs to the aldehyde dehydrogenase family. As to quaternary structure, dimer of dimers. It depends on K(+) as a cofactor.

The enzyme catalyses betaine aldehyde + NAD(+) + H2O = glycine betaine + NADH + 2 H(+). It participates in amine and polyamine biosynthesis; betaine biosynthesis via choline pathway; betaine from betaine aldehyde: step 1/1. Involved in the biosynthesis of the osmoprotectant glycine betaine. Catalyzes the irreversible oxidation of betaine aldehyde to the corresponding acid. The sequence is that of Betaine aldehyde dehydrogenase 2 from Rhizobium meliloti (strain 1021) (Ensifer meliloti).